The sequence spans 242 residues: tRNA (guanine-N(7)-)-methyltransferase (242 aa).

S-adenosyl-L-methionine-binding residues include glutamate 66, glutamate 91, aspartate 118, and aspartate 141. Residue aspartate 141 is part of the active site. Residues lysine 145, aspartate 177, and 214-217 (TKFE) contribute to the substrate site.

Belongs to the class I-like SAM-binding methyltransferase superfamily. TrmB family. As to quaternary structure, monomer.

It carries out the reaction guanosine(46) in tRNA + S-adenosyl-L-methionine = N(7)-methylguanosine(46) in tRNA + S-adenosyl-L-homocysteine. It functions in the pathway tRNA modification; N(7)-methylguanine-tRNA biosynthesis. Catalyzes the formation of N(7)-methylguanine at position 46 (m7G46) in tRNA. This Buchnera aphidicola subsp. Baizongia pistaciae (strain Bp) protein is tRNA (guanine-N(7)-)-methyltransferase.